Here is a 165-residue protein sequence, read N- to C-terminus: Cyclic pyranopterin monophosphate synthase (165 aa).

Residues 76–78 and 119–120 each bind substrate; these read LCH and ME. D134 is an active-site residue.

The protein belongs to the MoaC family. As to quaternary structure, homohexamer; trimer of dimers.

It catalyses the reaction (8S)-3',8-cyclo-7,8-dihydroguanosine 5'-triphosphate = cyclic pyranopterin phosphate + diphosphate. The protein operates within cofactor biosynthesis; molybdopterin biosynthesis. Functionally, catalyzes the conversion of (8S)-3',8-cyclo-7,8-dihydroguanosine 5'-triphosphate to cyclic pyranopterin monophosphate (cPMP). The sequence is that of Cyclic pyranopterin monophosphate synthase from Photobacterium profundum (strain SS9).